Here is a 500-residue protein sequence, read N- to C-terminus: Glucose-6-phosphate isomerase (500 aa).

Glu-332 serves as the catalytic Proton donor. Catalysis depends on residues His-363 and Lys-473.

The protein belongs to the GPI family.

The protein resides in the cytoplasm. It catalyses the reaction alpha-D-glucose 6-phosphate = beta-D-fructose 6-phosphate. It functions in the pathway carbohydrate biosynthesis; gluconeogenesis. The protein operates within carbohydrate degradation; glycolysis; D-glyceraldehyde 3-phosphate and glycerone phosphate from D-glucose: step 2/4. Catalyzes the reversible isomerization of glucose-6-phosphate to fructose-6-phosphate. This Rhizorhabdus wittichii (strain DSM 6014 / CCUG 31198 / JCM 15750 / NBRC 105917 / EY 4224 / RW1) (Sphingomonas wittichii) protein is Glucose-6-phosphate isomerase.